Consider the following 137-residue polypeptide: Large ribosomal subunit protein uL16 (137 aa).

Belongs to the universal ribosomal protein uL16 family. In terms of assembly, part of the 50S ribosomal subunit.

In terms of biological role, binds 23S rRNA and is also seen to make contacts with the A and possibly P site tRNAs. The chain is Large ribosomal subunit protein uL16 from Rhodopseudomonas palustris (strain BisA53).